A 480-amino-acid polypeptide reads, in one-letter code: MVGGELVLAALVILLALLLTLVLSHFLPLLLNPKAPKGSFGWPLLGETLRFLSPHASNTLGSFLEDHCSRYGRVFKSHLFCTPTIVSCDQELNHFILQNEERLFQCSYPRPIHGILGKSSMLVVLGEDHKRLRNLALALVTSTKLKPSYLGDIEKIALHIVGSWHGKSKDKGMVNVIAFCEEARKFAFSVIVKQVLGLSPEEPVTAMILEDFLAFMKGLISFPLYIPGTPYAKAVQARARISSTVKGIIEERRNAGSSNKGDFLDVLLSSNELSDEEKVSFVLDSLLGGYETTSLLISMVVYFLGQSAQDLELVKREHEGIRSKKEKDEFLSSEDYKKMEYTQHVINEALRCGNIVKFVHRKALKDVRYKEYLIPSGWKVLPVFSAVHLNPLLHGNAQQFQPCRWEGASQGTSKKFTPFGGGPRLCPGSELAKVEAAFFLHHLVLNYRWRIDGDDIPMAYPYVEFQRGLPIEIEPLCSES.

A helical membrane pass occupies residues 6 to 26; that stretch reads LVLAALVILLALLLTLVLSHF. Cys-426 is a binding site for heme.

Belongs to the cytochrome P450 family. Requires heme as cofactor. In terms of tissue distribution, ubiquitously expressed at low levels, but preferentially in the internodes and the florets before flowering.

It localises to the membrane. It catalyses the reaction campesterol + reduced [NADPH--hemoprotein reductase] + O2 = (22S)-22-hydroxycampesterol + oxidized [NADPH--hemoprotein reductase] + H2O + H(+). It functions in the pathway plant hormone biosynthesis; brassinosteroid biosynthesis. Involved in brassinosteroid biosynthesis. May catalyze a C6-oxidation step and may be involved to supply 6-deoxotyphasterol and typhasterol. Involved in internode elongation and seed development. Catalyzes the conversion of campesterol (CR) to (22S)-22-hydroxycampesterol (22-OHCR, 22-hydroxyCR). This is Cytochrome P450 724B1 from Oryza sativa subsp. japonica (Rice).